The sequence spans 471 residues: Ubiquitin carboxyl-terminal hydrolase 8 (471 aa).

Residues Cys-4, His-6, Cys-46, Cys-49, Cys-60, Cys-63, Cys-68, His-73, His-77, His-83, Cys-96, and Cys-99 each coordinate Zn(2+). The UBP-type; degenerate zinc finger occupies 22–122; it reads KTCNAARYIL…ILAKYWDDVC (101 aa). One can recognise a USP domain in the interval 137-468; that stretch reads SGLINMGSTC…QAYLLFYTIR (332 aa). Residue Cys-146 is the Nucleophile of the active site. Zn(2+) contacts are provided by His-170, Cys-174, Cys-182, Cys-185, His-250, Cys-271, Cys-273, His-276, Cys-289, Cys-292, Cys-336, and Cys-339. His-427 functions as the Proton acceptor in the catalytic mechanism.

It belongs to the peptidase C19 family. UBP8 subfamily. In terms of assembly, component of the 1.8 MDa SAGA (Spt-Ada-Gcn5 acetyltransferase) complex, which is composed of 19 subunits TRA1, SPT7, TAF5, NGG1/ADA3, SGF73, SPT20/ADA5, SPT8, TAF12, TAF6, HFI1/ADA1, UBP8, GCN5, ADA2, SPT3, SGF29, TAF10, TAF9, SGF11 and SUS1. The SAGA complex is composed of 4 modules, namely the HAT (histone acetyltransferase) module (GCN5, ADA2, NGG1/ADA3 and SGF29), the DUB (deubiquitinating) module (UBP8, SGF11, SGF73 and SUS1), the core or TAF (TBP-associated factor) module (TAF5, TAF6, TAF9, TAF10 and TAF12), and the Tra1 or SPT (Suppressor of Ty) module (TRA1, HFI1/ADA1, SPT3, SPT7, SPT8 and SPT20/ADA5). The Tra1/SPT module binds activators, the core module recruits TBP (TATA-binding protein), the HAT module contains the histone H3 acetyltransferase GCN5, and the DUB module comprises the histone H2B deubiquitinase UBP8. Also identified in an altered form of SAGA, named SALSA (SAGA altered, Spt8 absent) or SLIK (SAGA-like) complex, which contains a C-terminal truncated form of SPT7 and is missing SPT8. However, it has been shown that the SAGA and SAGA-like SALSA/SLIK transcriptional coactivators are structurally and biochemically equivalent.

Its subcellular location is the nucleus. It catalyses the reaction Thiol-dependent hydrolysis of ester, thioester, amide, peptide and isopeptide bonds formed by the C-terminal Gly of ubiquitin (a 76-residue protein attached to proteins as an intracellular targeting signal).. In terms of biological role, histone deubiquitinating enzyme component of the transcription coactivator SAGA complex. SAGA acts as a general cofactor required for essentially all RNA polymerase II transcription. At the promoters, SAGA is required for transcription pre-initiation complex (PIC) recruitment. It influences RNA polymerase II transcriptional activity through different activities such as TBP interaction (via core/TAF module) and promoter selectivity, interaction with transcription activators (via Tra1/SPT module), and chromatin modification through histone acetylation (via HAT module) and deubiquitination (via DUB module). SAGA preferentially acetylates histones H3 (to form H3K9ac, H3K14ac, H3K18ac and H3K23ac) and H2B and deubiquitinates histone H2B. SAGA interacts with DNA via upstream activating sequences (UASs). Also identified in a modified version of SAGA named SALSA or SLIK. The cleavage of SPT7 and the absence of the SPT8 subunit in SLIK neither drive any major conformational differences in its structure compared with SAGA, nor significantly affect HAT, DUB, or DNA-binding activities. Within the DUB module, the correctly positioned zinc finger domains of SGF11 and SGF73 are both required to fully activate the ubiquitin hydrolase UBP8. The DUB module is also linked to the splicing efficiency of many transcripts. This chain is Ubiquitin carboxyl-terminal hydrolase 8 (UBP8), found in Saccharomyces cerevisiae (strain ATCC 204508 / S288c) (Baker's yeast).